We begin with the raw amino-acid sequence, 526 residues long: Flavonoid 3'-monooxygenase CYP75B3 (526 aa).

A helical membrane pass occupies residues 6-26 (LPLLLGSLAVSAAVWYLVYFL). Heme is bound at residue C461.

Belongs to the cytochrome P450 family. Heme is required as a cofactor.

It is found in the membrane. It catalyses the reaction a 3'-unsubstituted flavone + reduced [NADPH--hemoprotein reductase] + O2 = a 3'-hydroxyflavone + oxidized [NADPH--hemoprotein reductase] + H2O + H(+). The protein operates within secondary metabolite biosynthesis; flavonoid biosynthesis. In terms of biological role, catalyzes the 3'-hydroxylation of the flavonoid B-ring to the 3',4'-hydroxylated state. Catalyzes the 3'-hydroxylation of apigenin to generate luteolin. The chain is Flavonoid 3'-monooxygenase CYP75B3 from Oryza sativa subsp. japonica (Rice).